The following is a 196-amino-acid chain: Transcription repressor OFP10 (196 aa).

One can recognise an OVATE domain in the interval 100–159 (MAKESINPFEDYKKSMNQMIEERYIETESELKELLRCFLDINPSPQHNLIVRAFVDVCSH).

As to expression, expressed in roots, cauline leaves, shoots, stems, flower buds and siliques.

It is found in the nucleus. Its function is as follows. Transcriptional repressor that may regulate multiple aspects of plant growth and development through the regulation of BEL1-LIKE (BLH) and KNOX TALE (KNAT) homeodomain transcription factors. In Arabidopsis thaliana (Mouse-ear cress), this protein is Transcription repressor OFP10 (OFP10).